The primary structure comprises 304 residues: Cell surface-binding protein OPG105 (304 aa).

The region spanning 1 to 235 (MPQQLSPINI…NDDTQVYYSG (235 aa)) is the Alpha-carbonic anhydrase domain. The Virion surface segment spans residues 1-275 (MPQQLSPINI…YQKYIEGNKT (275 aa)). The chain crosses the membrane as a helical span at residues 276–294 (FAIIAIVFVFILTAILFLM). Residues 295–304 (SRRYSREKQN) lie on the Intravirion side of the membrane.

The protein belongs to the alpha-carbonic anhydrase family. Homodimer; disulfide-linked. Apparently non-glycosylated.

It localises to the virion membrane. Functionally, binds to chondroitin sulfate on the cell surface to provide virion attachment to target cell. The chain is Cell surface-binding protein OPG105 (OPG105) from Rabbitpox virus (strain Utrecht) (RPV).